A 726-amino-acid chain; its full sequence is Dipeptidyl-peptidase 5 (726 aa).

Positions 1–19 (MAAAKWLIASLAFASSGLA) are cleaved as a signal peptide. N-linked (GlcNAc...) asparagine glycosylation is found at Asn96 and Asn252. The segment at 269-291 (AEPINKRNGPRTPQAIEGASSSP) is disordered. The Charge relay system role is filled by Ser558. The N-linked (GlcNAc...) asparagine glycan is linked to Asn605. Active-site charge relay system residues include Asp641 and His673. Residue Asn699 is glycosylated (N-linked (GlcNAc...) asparagine).

The protein belongs to the peptidase S9C family.

It localises to the secreted. Functionally, extracellular dipeptidyl-peptidase which removes N-terminal dipeptides sequentially from polypeptides having unsubstituted N-termini. Contributes to pathogenicity. This Trichophyton equinum (Horse ringworm fungus) protein is Dipeptidyl-peptidase 5 (DPP5).